The primary structure comprises 1192 residues: Outer capsid protein VP2 (1192 aa).

Positions 1112–1192 are disordered; the sequence is IDQFMLDDMP…QSVAKPGIVR (81 aa). Residues 1140-1150 show a composition bias toward low complexity; it reads PSAAANTEAST. The segment covering 1159–1183 has biased composition (polar residues); it reads NVVSPTVPGQPSQTPVNPNQSTELQ.

Its subcellular location is the virion. It catalyses the reaction a 5'-end diphospho-ribonucleoside in mRNA + GTP + H(+) = a 5'-end (5'-triphosphoguanosine)-ribonucleoside in mRNA + diphosphate. It carries out the reaction a 5'-end (5'-triphosphoguanosine)-ribonucleoside in mRNA + S-adenosyl-L-methionine = a 5'-end (N(7)-methyl 5'-triphosphoguanosine)-ribonucleoside in mRNA + S-adenosyl-L-homocysteine. Its function is as follows. Outer capsid protein involved in mRNA capping. Catalyzes the last 3 enzymatic activities for formation of the 5' cap structure on the viral plus-strand transcripts, namely the RNA guanylyltransferase, RNA-7N- and RNA-2'O-methyltransferase activities. The chain is Outer capsid protein VP2 (S2) from Rice ragged stunt virus (isolate Thailand) (RRSV).